Reading from the N-terminus, the 670-residue chain is UvrABC system protein B (670 aa).

Residues 26-183 form the Helicase ATP-binding domain; it reads EGLEDGLAHQ…RRLAELQYAR (158 aa). An ATP-binding site is contributed by 39–46; that stretch reads GVTGSGKT. A Beta-hairpin motif is present at residues 92 to 115; the sequence is YYDYYQPEAYVPSSDTFIEKDAAV. One can recognise a Helicase C-terminal domain in the interval 431–597; it reads QVDDLLSEIR…GLNKKVSDVL (167 aa). A UVR domain is found at 630–665; sequence DQKIRELEAQMYTHAQNLEFELAAGLRDEIHQLREQ.

The protein belongs to the UvrB family. Forms a heterotetramer with UvrA during the search for lesions. Interacts with UvrC in an incision complex.

The protein resides in the cytoplasm. The UvrABC repair system catalyzes the recognition and processing of DNA lesions. A damage recognition complex composed of 2 UvrA and 2 UvrB subunits scans DNA for abnormalities. Upon binding of the UvrA(2)B(2) complex to a putative damaged site, the DNA wraps around one UvrB monomer. DNA wrap is dependent on ATP binding by UvrB and probably causes local melting of the DNA helix, facilitating insertion of UvrB beta-hairpin between the DNA strands. Then UvrB probes one DNA strand for the presence of a lesion. If a lesion is found the UvrA subunits dissociate and the UvrB-DNA preincision complex is formed. This complex is subsequently bound by UvrC and the second UvrB is released. If no lesion is found, the DNA wraps around the other UvrB subunit that will check the other stand for damage. This Serratia proteamaculans (strain 568) protein is UvrABC system protein B.